Here is a 59-residue protein sequence, read N- to C-terminus: uncharacterized protein (59 aa).

This is an uncharacterized protein from Haemophilus influenzae (strain ATCC 51907 / DSM 11121 / KW20 / Rd).